The following is a 471-amino-acid chain: Serine/threonine-protein kinase sid1 (471 aa).

One can recognise a Protein kinase domain in the interval 9–260; the sequence is YTLLRKLGSG…AKELLQHPFI (252 aa). Residues 15–23 and lysine 38 each bind ATP; that span reads LGSGSFGVV. The active-site Proton acceptor is the aspartate 129.

The protein belongs to the protein kinase superfamily. STE Ser/Thr protein kinase family. STE20 subfamily. As to quaternary structure, interacts with cdc14.

The protein resides in the cytoplasm. It localises to the cytoskeleton. Its subcellular location is the microtubule organizing center. It is found in the spindle pole body. The catalysed reaction is L-seryl-[protein] + ATP = O-phospho-L-seryl-[protein] + ADP + H(+). It catalyses the reaction L-threonyl-[protein] + ATP = O-phospho-L-threonyl-[protein] + ADP + H(+). Functionally, has a role in the septation initiation network (SIN) required for cytokinesis. The chain is Serine/threonine-protein kinase sid1 (sid1) from Schizosaccharomyces pombe (strain 972 / ATCC 24843) (Fission yeast).